The sequence spans 572 residues: Proline--tRNA ligase (572 aa).

The protein belongs to the class-II aminoacyl-tRNA synthetase family. ProS type 1 subfamily. Homodimer.

Its subcellular location is the cytoplasm. It carries out the reaction tRNA(Pro) + L-proline + ATP = L-prolyl-tRNA(Pro) + AMP + diphosphate. Functionally, catalyzes the attachment of proline to tRNA(Pro) in a two-step reaction: proline is first activated by ATP to form Pro-AMP and then transferred to the acceptor end of tRNA(Pro). As ProRS can inadvertently accommodate and process non-cognate amino acids such as alanine and cysteine, to avoid such errors it has two additional distinct editing activities against alanine. One activity is designated as 'pretransfer' editing and involves the tRNA(Pro)-independent hydrolysis of activated Ala-AMP. The other activity is designated 'posttransfer' editing and involves deacylation of mischarged Ala-tRNA(Pro). The misacylated Cys-tRNA(Pro) is not edited by ProRS. The polypeptide is Proline--tRNA ligase (Escherichia coli O9:H4 (strain HS)).